We begin with the raw amino-acid sequence, 449 residues long: C4-dicarboxylate transport protein (449 aa).

The next 8 membrane-spanning stretches (helical) occupy residues 18 to 38, 61 to 81, 93 to 113, 159 to 179, 202 to 222, 244 to 264, 311 to 331, and 369 to 389; these read PFYLQLYFWVIIAIILGALLG, MIISPVIFLTIVTGIASVAHV, VYFLFFSTLALLLGLVVAHVV, FVGDNILQVLFVAVLFGIALA, LVQMLMKMAPIGAFGAIAFTI, SLLFVLVILGAVSWLCGFSIL, GYSFNLDGTNIYMTLAALFIA, and AATLAVVPEVPIAGMALILGV.

This sequence belongs to the dicarboxylate/amino acid:cation symporter (DAACS) (TC 2.A.23) family.

Its subcellular location is the cell inner membrane. Functionally, responsible for the transport of dicarboxylates such as succinate, fumarate, and malate from the periplasm across the membrane. This chain is C4-dicarboxylate transport protein, found in Xylella fastidiosa (strain M12).